A 320-amino-acid chain; its full sequence is Mitochondrial thiamine pyrophosphate carrier 1 (320 aa).

Solcar repeat units lie at residues 12–110, 119–205, and 213–308; these read GTRR…TTQA, PQPV…LRPS, and PFGS…TLRA. 6 consecutive transmembrane segments (helical) span residues 17-35, 91-107, 125-145, 180-197, 219-239, and 283-300; these read VVLA…VAPL, LMYV…YRTT, FVAG…LDLL, GCSA…LFFA, ALAG…LDLV, and GLTV…VTMW.

It belongs to the mitochondrial carrier (TC 2.A.29) family.

The protein localises to the mitochondrion inner membrane. Functionally, mitochondrial transporter that mediates uptake of thiamine pyrophosphate (ThPP) into mitochondria. The chain is Mitochondrial thiamine pyrophosphate carrier 1 (tpc1) from Aspergillus terreus (strain NIH 2624 / FGSC A1156).